The following is a 340-amino-acid chain: Uroporphyrinogen decarboxylase (340 aa).

Substrate-binding positions include 21–25, aspartate 71, tyrosine 148, serine 203, and histidine 316; that span reads RQAGR.

This sequence belongs to the uroporphyrinogen decarboxylase family. As to quaternary structure, homodimer.

It localises to the cytoplasm. It carries out the reaction uroporphyrinogen III + 4 H(+) = coproporphyrinogen III + 4 CO2. It participates in porphyrin-containing compound metabolism; protoporphyrin-IX biosynthesis; coproporphyrinogen-III from 5-aminolevulinate: step 4/4. Its function is as follows. Catalyzes the decarboxylation of four acetate groups of uroporphyrinogen-III to yield coproporphyrinogen-III. This chain is Uroporphyrinogen decarboxylase, found in Campylobacter lari (strain RM2100 / D67 / ATCC BAA-1060).